Here is a 323-residue protein sequence, read N- to C-terminus: MYHNSSQKRHWTFASEEQLARLRADANRKFKCKAVANGKVLPNDPLFLEPHEEMTLCKYYEKRLLEFCSVFKPAMPRSVVGTACMYFKRFYLNNSVMEYHPRIIMLTCAFLACKVDEFNVSSPQFVGNLRESPLGQEKALEQILEYELLLIQQLNFHLIVHNPYRPFEGFLIDIKTRYPMLENPEILRKTADDFLSRIALTDAYLLYTPSQIALTAILSSASRAGITMESYLSESLMLKENRTCLSQLLDIMKSMRNLVKKYEPPRSEEVAILKQKLERCHSSDLALNMVTKKRKGYEDDDYVSKKPKQEEEEWTDDDLVDAL.

Residue S5 is modified to Phosphoserine; by CDK8. The residue at position 132 (S132) is a Phosphoserine. The segment at 296 to 323 (GYEDDDYVSKKPKQEEEEWTDDDLVDAL) is disordered. S304 carries the post-translational modification Phosphoserine; by CDK8. Over residues 310–323 (EEEEWTDDDLVDAL) the composition is skewed to acidic residues. Phosphothreonine is present on T315.

Belongs to the cyclin family. Cyclin C subfamily. Associates primarily with CDK7 and MAT1 to form the CAK complex. CAK can further associate with the core-TFIIH to form the TFIIH basal transcription factor.

It localises to the nucleus. In terms of biological role, regulates CDK7, the catalytic subunit of the CDK-activating kinase (CAK) enzymatic complex. CAK activates the cyclin-associated kinases CDK1, CDK2, CDK4 and CDK6 by threonine phosphorylation. CAK complexed to the core-TFIIH basal transcription factor activates RNA polymerase II by serine phosphorylation of the repetitive C-terminal domain (CTD) of its large subunit (POLR2A), allowing its escape from the promoter and elongation of the transcripts. Involved in cell cycle control and in RNA transcription by RNA polymerase II. Its expression and activity are constant throughout the cell cycle. The polypeptide is Cyclin-H (Ccnh) (Rattus norvegicus (Rat)).